We begin with the raw amino-acid sequence, 209 residues long: Uracil phosphoribosyltransferase (209 aa).

5-phospho-alpha-D-ribose 1-diphosphate-binding positions include arginine 77, arginine 102, and 129-137 (DPMLATGSS). Residues isoleucine 192 and 197–199 (GDA) each bind uracil. Aspartate 198 contacts 5-phospho-alpha-D-ribose 1-diphosphate.

Belongs to the UPRTase family. The cofactor is Mg(2+).

The catalysed reaction is UMP + diphosphate = 5-phospho-alpha-D-ribose 1-diphosphate + uracil. It participates in pyrimidine metabolism; UMP biosynthesis via salvage pathway; UMP from uracil: step 1/1. Allosterically activated by GTP. Its function is as follows. Catalyzes the conversion of uracil and 5-phospho-alpha-D-ribose 1-diphosphate (PRPP) to UMP and diphosphate. The sequence is that of Uracil phosphoribosyltransferase from Metamycoplasma hominis (Mycoplasma hominis).